A 185-amino-acid polypeptide reads, in one-letter code: Elongation factor P (185 aa).

Belongs to the elongation factor P family.

The protein localises to the cytoplasm. Its pathway is protein biosynthesis; polypeptide chain elongation. Its function is as follows. Involved in peptide bond synthesis. Stimulates efficient translation and peptide-bond synthesis on native or reconstituted 70S ribosomes in vitro. Probably functions indirectly by altering the affinity of the ribosome for aminoacyl-tRNA, thus increasing their reactivity as acceptors for peptidyl transferase. This chain is Elongation factor P, found in Limosilactobacillus fermentum (strain NBRC 3956 / LMG 18251) (Lactobacillus fermentum).